Here is a 576-residue protein sequence, read N- to C-terminus: G protein-coupled receptor kinase 6 (576 aa).

The N-terminal stretch occupies residues 1–185 (MELENIVANT…LERQPVTKNT (185 aa)). The 119-residue stretch at 53 to 171 (YHSLCERQPI…LDSIYFNRFL (119 aa)) folds into the RGS domain. A Protein kinase domain is found at 186 to 448 (FRQYRVLGKG…AREVKEHPLF (263 aa)). Residues 192–200 (LGKGGFGEV), lysine 215, and 264–270 (TLMNGGD) contribute to the ATP site. Aspartate 311 (proton acceptor) is an active-site residue. 315 to 318 (ENIL) contributes to the ATP binding site. The AGC-kinase C-terminal domain maps to 449–514 (KKLNFKRLGA…GSVSIPWQNE (66 aa)). At serine 484 the chain carries Phosphoserine. Threonine 485 bears the Phosphothreonine mark. Residues cysteine 561, cysteine 562, and cysteine 565 are each lipidated (S-palmitoyl cysteine). A phosphoserine mark is found at serine 566 and serine 568.

This sequence belongs to the protein kinase superfamily. AGC Ser/Thr protein kinase family. GPRK subfamily. Interacts with GIT1. As to expression, expressed in the brain in striatal neurons.

Its subcellular location is the membrane. It catalyses the reaction [G-protein-coupled receptor] + ATP = [G-protein-coupled receptor]-phosphate + ADP + H(+). Its function is as follows. Specifically phosphorylates the activated forms of G protein-coupled receptors. Such receptor phosphorylation initiates beta-arrestin-mediated receptor desensitization, internalization, and signaling events leading to their desensitization. Seems to be involved in the desensitization of D2-like dopamine receptors in striatum and chemokine receptor CXCR4 which is critical for CXCL12-induced cell chemotaxis. Phosphorylates rhodopsin (RHO) (in vitro) and a non G-protein-coupled receptor, LRP6 during Wnt signaling (in vitro). In Mus musculus (Mouse), this protein is G protein-coupled receptor kinase 6 (Grk6).